Consider the following 148-residue polypeptide: Small ribosomal subunit protein eS19 (148 aa).

This sequence belongs to the eukaryotic ribosomal protein eS19 family.

This chain is Small ribosomal subunit protein eS19 (rps19), found in Dictyostelium discoideum (Social amoeba).